The primary structure comprises 918 residues: UPF0182 protein CPR_0011 (918 aa).

7 helical membrane-spanning segments follow: residues 8 to 28 (TVLI…NFII), 46 to 66 (LIAI…VIAI), 91 to 111 (FLLS…TTQW), 151 to 171 (AISL…ALGF), 200 to 220 (LAVL…LKSY), 243 to 263 (IFYK…FISI), and 271 to 291 (IIIS…VAIF).

This sequence belongs to the UPF0182 family.

The protein localises to the cell membrane. The sequence is that of UPF0182 protein CPR_0011 from Clostridium perfringens (strain SM101 / Type A).